The primary structure comprises 623 residues: DEAD-box ATP-dependent RNA helicase 52C (623 aa).

The disordered stretch occupies residues 1 to 120 (MATPSRTSWA…DGDAAAGAGD (120 aa)). Over residues 10-29 (ADVADADPAPAPAPAANGPA) the composition is skewed to low complexity. Residues 54-69 (APPPSSSSSSAPPPRA) show a composition bias toward pro residues. The segment covering 70–83 (APGLLAPRPAAAGM) has biased composition (low complexity). Residues 84–97 (GRMGGGGGGGGFGG) show a composition bias toward gly residues. The Q motif motif lies at 155–183 (GTFAEIDLGQALNDNIRRCKYVRPTPVQR). Positions 186–372 (IPISLAGRDL…SDFLENYIFL (187 aa)) constitute a Helicase ATP-binding domain. 199-206 (AQTGSGKT) is a binding site for ATP. The DEAD box signature appears at 316-319 (DEAD). The Helicase C-terminal domain maps to 399–550 (HLMDLLHAQR…EVPAWLSRYA (152 aa)). The disordered stretch occupies residues 553-595 (PSYGGGGGRNRRSGGGSRFGGRDFRRDSSSGRGGGDYYGGGSS). The segment covering 555–571 (YGGGGGRNRRSGGGSRF) has biased composition (gly residues). The span at 572–581 (GGRDFRRDSS) shows a compositional bias: basic and acidic residues. The segment covering 583 to 595 (GRGGGDYYGGGSS) has biased composition (gly residues).

This sequence belongs to the DEAD box helicase family. DDX3/DED1 subfamily.

The enzyme catalyses ATP + H2O = ADP + phosphate + H(+). The chain is DEAD-box ATP-dependent RNA helicase 52C from Oryza sativa subsp. japonica (Rice).